We begin with the raw amino-acid sequence, 505 residues long: Lysine--tRNA ligase (505 aa).

Residues Glu-415 and Glu-422 each coordinate Mg(2+).

The protein belongs to the class-II aminoacyl-tRNA synthetase family. As to quaternary structure, homodimer. Mg(2+) is required as a cofactor.

The protein resides in the cytoplasm. The enzyme catalyses tRNA(Lys) + L-lysine + ATP = L-lysyl-tRNA(Lys) + AMP + diphosphate. This chain is Lysine--tRNA ligase, found in Pectobacterium atrosepticum (strain SCRI 1043 / ATCC BAA-672) (Erwinia carotovora subsp. atroseptica).